Here is a 1021-residue protein sequence, read N- to C-terminus: Ankyrin repeat- and BTB/POZ domain-containing protein 3-A (1021 aa).

Residues 160-180 (MVLSWTISVNCITAALSALSL) traverse the membrane as a helical segment. 4 ANK repeats span residues 515–544 (QGMTPLMYSCVRGDEAMVQMLLDAGADINS), 561–590 (RQGTPLTFAVLHGHVPVVQLLLDARANVEG), 599–628 (YTETPLQLASAAGNFELVSLLLERGADPLI), and 642–671 (GEMNSYSLAAAHGHRNVFRKLLSQVEKDKG). One can recognise a BTB domain in the interval 836-902 (SDVTFLVEGK…LYCGGTESLH (67 aa)).

Its subcellular location is the membrane. The polypeptide is Ankyrin repeat- and BTB/POZ domain-containing protein 3-A (abtb3a) (Danio rerio (Zebrafish)).